A 168-amino-acid polypeptide reads, in one-letter code: Photosystem I assembly protein Ycf3 (168 aa).

TPR repeat units lie at residues 35 to 68, 72 to 105, and 120 to 153; these read AFTYYRDGMSAQSEGNYAEALQNYYEAMRLEIDP, SYILYNIGLIHTSNGEHTKALEYYFRALERNPFL, and GEQAIRQGDSEIAEAWFDQAAEYWKQAIALTPGN.

Belongs to the Ycf3 family.

The protein localises to the plastid. It localises to the chloroplast thylakoid membrane. Functionally, essential for the assembly of the photosystem I (PSI) complex. May act as a chaperone-like factor to guide the assembly of the PSI subunits. This is Photosystem I assembly protein Ycf3 from Gossypium barbadense (Sea Island cotton).